We begin with the raw amino-acid sequence, 189 residues long: Ribosome maturation factor RimM (189 aa).

The PRC barrel domain occupies 118–189; it reads SGEYYWDDLI…IILVDWDENF (72 aa).

This sequence belongs to the RimM family. In terms of assembly, binds ribosomal protein uS19.

The protein resides in the cytoplasm. Functionally, an accessory protein needed during the final step in the assembly of 30S ribosomal subunit, possibly for assembly of the head region. Essential for efficient processing of 16S rRNA. May be needed both before and after RbfA during the maturation of 16S rRNA. It has affinity for free ribosomal 30S subunits but not for 70S ribosomes. This chain is Ribosome maturation factor RimM, found in Ruthia magnifica subsp. Calyptogena magnifica.